The chain runs to 156 residues: MTTLNAKPDFSLFLQALSWEIDDQAGIEVRNDLLREVGRGMAGRFQPPLCNTIHQLQIELNALLAMINWGYVKLDLLAEEQAMRIVHEDLPQVGSAGEPAGTWLAPVLEGLYGRWITSQPGAFGDYVVTRDIDAEDLNSVPAQTVILYMRTRSAAT.

It functions in the pathway glycan metabolism; bacterial cellulose biosynthesis. May have a major role in the perfection of crystallization, involved either in the pore structure itself or in the organization of the pores within the linear array of terminal synthesizing complexes (TCs). The sequence is that of Cellulose synthase operon protein D from Komagataeibacter sucrofermentans (strain ATCC 700178 / DSM 15973 / CECT 7291 / JCM 9730 / LMG 18788 / BPR 2001) (Acetobacter xylinus subsp. sucrofermentans).